The primary structure comprises 216 residues: ATP-dependent Clp protease proteolytic subunit (216 aa).

Catalysis depends on S120, which acts as the Nucleophile. H145 is a catalytic residue.

The protein belongs to the peptidase S14 family. As to quaternary structure, fourteen ClpP subunits assemble into 2 heptameric rings which stack back to back to give a disk-like structure with a central cavity, resembling the structure of eukaryotic proteasomes.

The protein localises to the cytoplasm. The catalysed reaction is Hydrolysis of proteins to small peptides in the presence of ATP and magnesium. alpha-casein is the usual test substrate. In the absence of ATP, only oligopeptides shorter than five residues are hydrolyzed (such as succinyl-Leu-Tyr-|-NHMec, and Leu-Tyr-Leu-|-Tyr-Trp, in which cleavage of the -Tyr-|-Leu- and -Tyr-|-Trp bonds also occurs).. Functionally, cleaves peptides in various proteins in a process that requires ATP hydrolysis. Has a chymotrypsin-like activity. Plays a major role in the degradation of misfolded proteins. This is ATP-dependent Clp protease proteolytic subunit from Cupriavidus pinatubonensis (strain JMP 134 / LMG 1197) (Cupriavidus necator (strain JMP 134)).